Reading from the N-terminus, the 130-residue chain is Small ribosomal subunit protein uS8 (130 aa).

It belongs to the universal ribosomal protein uS8 family. As to quaternary structure, part of the 30S ribosomal subunit. Contacts proteins S5 and S12.

Functionally, one of the primary rRNA binding proteins, it binds directly to 16S rRNA central domain where it helps coordinate assembly of the platform of the 30S subunit. This chain is Small ribosomal subunit protein uS8, found in Buchnera aphidicola subsp. Cinara cedri (strain Cc).